Consider the following 282-residue polypeptide: F-box/SPRY domain-containing protein 1 (282 aa).

Residues 1-32 (MAAAAINAAAPPPPVAPTAPPPPPPPPLSQAS) form a disordered region. A compositionally biased stretch (pro residues) spans 10–28 (APPPPVAPTAPPPPPPPPL). Positions 29-78 (SQASGRLPSRVLELVFSYLDLPDLRSCGLVCKHWYRCLHGDENSEVWRSL) constitute an F-box domain. The 193-residue stretch at 88–280 (LRTDILCNLP…VTLVYLGKPL (193 aa)) folds into the B30.2/SPRY domain.

This sequence belongs to the FBXO45/Fsn family. Probable component of a E3 ubiquitin ligase complex.

It functions in the pathway protein modification; protein ubiquitination. The chain is F-box/SPRY domain-containing protein 1 (fbxo45) from Xenopus tropicalis (Western clawed frog).